The primary structure comprises 93 residues: UPF0358 protein LMHCC_1561 (93 aa).

Belongs to the UPF0358 family.

The chain is UPF0358 protein LMHCC_1561 from Listeria monocytogenes serotype 4a (strain HCC23).